Reading from the N-terminus, the 150-residue chain is Small ribosomal subunit protein eS19 (150 aa).

It belongs to the eukaryotic ribosomal protein eS19 family. In terms of assembly, part of the 30S ribosomal subunit.

Its function is as follows. May be involved in maturation of the 30S ribosomal subunit. The protein is Small ribosomal subunit protein eS19 of Thermococcus kodakarensis (strain ATCC BAA-918 / JCM 12380 / KOD1) (Pyrococcus kodakaraensis (strain KOD1)).